Reading from the N-terminus, the 236-residue chain is Phosphoribosylaminoimidazole-succinocarboxamide synthase (236 aa).

Belongs to the SAICAR synthetase family.

It catalyses the reaction 5-amino-1-(5-phospho-D-ribosyl)imidazole-4-carboxylate + L-aspartate + ATP = (2S)-2-[5-amino-1-(5-phospho-beta-D-ribosyl)imidazole-4-carboxamido]succinate + ADP + phosphate + 2 H(+). It functions in the pathway purine metabolism; IMP biosynthesis via de novo pathway; 5-amino-1-(5-phospho-D-ribosyl)imidazole-4-carboxamide from 5-amino-1-(5-phospho-D-ribosyl)imidazole-4-carboxylate: step 1/2. In Chlorobium phaeobacteroides (strain DSM 266 / SMG 266 / 2430), this protein is Phosphoribosylaminoimidazole-succinocarboxamide synthase.